Reading from the N-terminus, the 158-residue chain is Histone H2B.1 (158 aa).

An N6-acetyllysine mark is found at Lys-7 and Lys-25. Disordered regions lie at residues 26–45 (AAAG…PKKG) and 135–158 (VHNF…GQQT). Positions 135 to 144 (VHNFESETSK) are enriched in basic and acidic residues. Over residues 147 to 158 (SQGRKRGRGQQT) the composition is skewed to basic residues.

Belongs to the histone H2B family. The nucleosome is a histone octamer containing two molecules each of H2A, H2B, H3 and H4 assembled in one H3-H4 heterotetramer and two H2A-H2B heterodimers. The octamer wraps approximately 147 bp of DNA. In terms of processing, can be acetylated to form H2BK6ac and H2BK33ac. Expressed in the generative cell within the bicellular pollen. Not detected in other reproductive or vegetative tissues.

Its subcellular location is the nucleus. It localises to the chromosome. In terms of biological role, core component of nucleosome. Nucleosomes wrap and compact DNA into chromatin, limiting DNA accessibility to the cellular machineries which require DNA as a template. Histones thereby play a central role in transcription regulation, DNA repair, DNA replication and chromosomal stability. DNA accessibility is regulated via a complex set of post-translational modifications of histones, also called histone code, and nucleosome remodeling. This chain is Histone H2B.1, found in Lilium longiflorum (Trumpet lily).